Reading from the N-terminus, the 139-residue chain is Ribonuclease P protein component (139 aa).

A disordered region spans residues Lys-120–Arg-139.

Belongs to the RnpA family. As to quaternary structure, consists of a catalytic RNA component (M1 or rnpB) and a protein subunit.

The enzyme catalyses Endonucleolytic cleavage of RNA, removing 5'-extranucleotides from tRNA precursor.. Functionally, RNaseP catalyzes the removal of the 5'-leader sequence from pre-tRNA to produce the mature 5'-terminus. It can also cleave other RNA substrates such as 4.5S RNA. The protein component plays an auxiliary but essential role in vivo by binding to the 5'-leader sequence and broadening the substrate specificity of the ribozyme. The sequence is that of Ribonuclease P protein component from Chlamydia pneumoniae (Chlamydophila pneumoniae).